Consider the following 141-residue polypeptide: MDKKYDITAVLNDDSSINAVSDNFQITLDARPKEKSKGINPLSAFLAGLAACELATANAMAAAKMITLNKALINIKGYRLTNPSDGYFGLRELNIHWEIHSPNEEEEIKEFIDFVSKRCPAHNTLHGTSNFKINISVTLVH.

The protein belongs to the OsmC/Ohr family. As to quaternary structure, homodimer.

Its subcellular location is the cytoplasm. Its function is as follows. Reduces organic and inorganic peroxide substrates. Protects the cell against oxidative stress. The sequence is that of Hydroperoxide reductase from Mycoplasma genitalium (strain ATCC 33530 / DSM 19775 / NCTC 10195 / G37) (Mycoplasmoides genitalium).